The sequence spans 707 residues: Ribosomal RNA large subunit methyltransferase K/L (707 aa).

In terms of domain architecture, THUMP spans Q43–M154.

The protein belongs to the methyltransferase superfamily. RlmKL family.

It is found in the cytoplasm. It carries out the reaction guanosine(2445) in 23S rRNA + S-adenosyl-L-methionine = N(2)-methylguanosine(2445) in 23S rRNA + S-adenosyl-L-homocysteine + H(+). The catalysed reaction is guanosine(2069) in 23S rRNA + S-adenosyl-L-methionine = N(2)-methylguanosine(2069) in 23S rRNA + S-adenosyl-L-homocysteine + H(+). Its function is as follows. Specifically methylates the guanine in position 2445 (m2G2445) and the guanine in position 2069 (m7G2069) of 23S rRNA. The chain is Ribosomal RNA large subunit methyltransferase K/L from Vibrio campbellii (strain ATCC BAA-1116).